The following is a 218-amino-acid chain: MGMDAEFFVDGERVDSYKCTGRWSAIVDVRHRPALTVRYRYERGYGHYALFVYFRHVATGMLETERVDVADRDRVVPVPEEWLEYIDDDDEERERQVEVFVCMKGDCYAHDGPLFVSEASKWCSREPEHVRIRDSPLEAVRQIKCAEDVFAFVEAFMRIEEGEYAWRDPLVIDQLNDQELASIEKVFASTVWNYYEKVNARPVLTFAENYLKKLNESL.

Facilitates AcMNPV replication in two non-permissive cell lines, IPLB-Ld652Y and IPLB-LdFB. This Lepidoptera (butterflies and moths) protein is Host range factor 1 (HRF-1).